A 423-amino-acid chain; its full sequence is Probable sodium/metabolite cotransporter BASS4, chloroplastic (423 aa).

A chloroplast-targeting transit peptide spans 1–55; the sequence is MVTTHHLCLLRSTVLSVPVRLRAPRAPPHPRLPTASASASSYHGPTHLRRLRPLR. Residues 23–45 are disordered; the sequence is APRAPPHPRLPTASASASSYHGP. A run of 9 helical transmembrane segments spans residues 96-116, 123-140, 153-173, 182-202, 212-232, 244-264, 284-301, 315-335, and 389-409; these read FLPLALIAGIALALMDPTLGC, LSKYSTFGIFLISGLTLR, AGLFGLASILLFTPFLAQFIM, FITGLAMFCCMPTTLSSGVTL, LALAMTAISNLLGIMIVPLSL, LPTEKLFKSLVTTLLIPIILG, GFSVTSAILLSLVPWIQV, AFAVAVTVGVLLHFALLAFNA, and LLVIPCVAAHINQIIIDSIIV.

The protein belongs to the bile acid:sodium symporter (BASS) (TC 2.A.28) family.

It is found in the membrane. The protein localises to the plastid. It localises to the chloroplast envelope. May function as sodium-coupled metabolite transporter across the chloroplast envelope. In Oryza sativa subsp. indica (Rice), this protein is Probable sodium/metabolite cotransporter BASS4, chloroplastic (BASS4).